The following is a 172-amino-acid chain: CD-NTase-associated protein 7 (172 aa).

The segment at 141-172 (AQSPGINGYLENDKTYSAGGRSLTRTSVRNFV) is required for binding to CdnC and to confer phage immunity.

Belongs to the bacterial HORMA family. HORMA1 subfamily. As to quaternary structure, forms complexes with CdnC with 1:1 and 2:2 stoichimetry, and a 1:1:6 CdnC:Cap7:Cap6 complex.

Functionally, sensor protein of a CBASS antivirus system. CBASS (cyclic oligonucleotide-based antiphage signaling system) provides immunity against bacteriophage. The CD-NTase protein synthesizes cyclic nucleotides in response to infection; these serve as specific second messenger signals. The signals activate a diverse range of effectors, leading to bacterial cell death and thus abortive phage infection. A type III-C(AAA) CBASS system. Its function is as follows. Binds to a closure peptide (consensus His-Xaa-Xaa-Ile-Leu-Leu-Thr), which allows it to activate CdnC for second messenger synthesis. Protects E.coli strain JP313 against bacteriophage lambda cI- infection. When the cdnC-cap7-cap6-nucC operon is transformed into a susceptible strain it confers bacteriophage immunity. Mutations in the sensor (Cap7 also called HORMA) or effector proteins (CdnC, NucC) but not the disassembly protein (Cap6 also called Trip13) no longer confer immunity. The presence of the intact operon leads to culture collapse and cell death, which occurs before the phage has finished its replication cycle, thus protecting non-infected bacteria by aborting the phage infection and preventing its propagation. This chain is CD-NTase-associated protein 7, found in Escherichia coli (strain MS 115-1).